The sequence spans 84 residues: Minor capsid protein P30 (84 aa).

As to quaternary structure, dimer.

It localises to the virion. Minor capsid protein essential for stable capsid assembly of complete particles. The protein is Minor capsid protein P30 (XXX) of Enterobacteria phage PRD1 (Bacteriophage PRD1).